A 609-amino-acid polypeptide reads, in one-letter code: UvrABC system protein C (609 aa).

A GIY-YIG domain is found at 16-94 (SSAGVYRMYD…IKQYMPRYNV (79 aa)). A UVR domain is found at 203 to 238 (QQVIATLVGKMEQAAMDLNYEDAARYRDQISALRRV).

The protein belongs to the UvrC family. Interacts with UvrB in an incision complex.

Its subcellular location is the cytoplasm. The UvrABC repair system catalyzes the recognition and processing of DNA lesions. UvrC both incises the 5' and 3' sides of the lesion. The N-terminal half is responsible for the 3' incision and the C-terminal half is responsible for the 5' incision. The polypeptide is UvrABC system protein C (Shewanella loihica (strain ATCC BAA-1088 / PV-4)).